Consider the following 130-residue polypeptide: Small ribosomal subunit protein uS9 (130 aa).

Belongs to the universal ribosomal protein uS9 family.

The polypeptide is Small ribosomal subunit protein uS9 (Hydrogenovibrio crunogenus (strain DSM 25203 / XCL-2) (Thiomicrospira crunogena)).